The following is a 680-amino-acid chain: MLTHKTCQARKKMQVSFVIRDAEEKQHRNGVNALQLDANNGKLYSAGRDAIIRVWNTRTDSSEKYIQSMEHHNDWVNDIVLCCNGRNLISASCDTTVKVWNAQKGFCMSTLRTHRDYVQALAYAKDREQVASAGLDKAIFLWDVNTLTALTASNNTVTTSSLTGSKDSIYSLAMNPSGTVIVSGSTENILRIWDPRTCMRSMKLRGHTENVRCLVVSPDGNQVVSGSSDGTIKVWNLGQQRCVQTIHVHKEGVWSLLMSENFQYIISGSRDRNIIVTEMRNPSNKTLVCEEQAPVLSLGYNIDKTGVWATTWNSDIRCWKLPMYDRCTMNSSGGMDAQWTQGGTEVACIKGGAAIKECAVLNDKRYIITKDSQDQVVVYDVLRVVKKEQLGAVDYEAEVKKRNKQVYIPNWFTVDLKTGMPTIVLGQEEVDCFSAWVSIEAGLPECVDPTTEIKINYGKLLLEALLEYWTPPHSIPPNEMEPDMHGNGYFQVPKHTPVIFSEVGGRTVCRLLVRDAAGDSESTLLHETAPQWVTDVVIEKNIPKFLKIPFFLQPHPQMTKPERTKKDRLVANEFIQCRKVCEHVLEKVLNAETTPSGGNANNSLQNSQSDANSEGSQLPAEERIELWCNDVVVDPNMDLRTVRHFIWKQSTDLTFQYKTKQNFNYDGSIGDSLERVTRKY.

8 WD repeats span residues 26-65, 71-110, 113-152, 164-203, 206-245, 248-287, 290-329, and 350-389; these read QHRN…SEKY, HHND…CMST, THRD…ALTA, GSKD…RSMK, GHTE…CVQT, VHKE…NKTL, EEQA…RCTM, and KGGA…KKEQ. The disordered stretch occupies residues 592 to 616; sequence ETTPSGGNANNSLQNSQSDANSEGS.

It belongs to the WD repeat WDR48 family. In terms of assembly, catalytic component of the Usp12-46 deubiquitylase complex consisting of Usp12-46, Wdr20 and Uaf1; regulatory subunit that, together wtih Wdr20, stabilizes Usp12-46. The Usp12-46 deubiquitylase complex associates with arr/arrow; the interaction leads to deubiquitination and stabilization of arr/arrow.

Functionally, regulatory component of the Usp12-46 deubiquitylase complex. activates deubiquitination by increasing the catalytic turnover without increasing the affinity of deubiquitinating enzymes for the substrate. The complex deubiquitylates the wg/wingless-signaling receptor arr/arrow, which stabilizes the receptor and increases its concentration at the cell surface; this enhances the sensitivity of cells to wg/wingless-signal stimulation. This increases the amplitude and spatial range of the signaling response to the wg/wingless morphogen gradient, facilitating the precise concentration-dependent regulation of its target genes. Together with Wdr20 and Usp12-46 required for wg/wingless-mediated signaling in the wing imaginal disc and for wg/wingless-dependent regulation of intestinal stem cell proliferation. The polypeptide is WD repeat-containing protein 48 homolog (Drosophila erecta (Fruit fly)).